A 308-amino-acid polypeptide reads, in one-letter code: MRSRGVKYVSVRARLARSRVLAYLALTKPRVIELLLVTAIPAMLLADRGSANPLLILNTLLGGISAAAGANTFNCVADADIDKLMKRTSRRPLARAAVPPRNALVLGLALTAGSFFWLWWTTNLLSGLLALATVAFYVFVYTLLLKRRTSQNVVWGGAAGCMPVMIGWSAITDTIGWPALAMFAIIFFWTPPHTWALAMRYKDDYKVASVPMLPAVATERHVTKQILIYTWLTALSTLVLALATGWLYMAVAVVAGAWFLTMAHQLYVGVCAGEPVKPLRLFLQSNNYLAVVFCALAVDSVLALPTLF.

Transmembrane regions (helical) follow at residues 20–40, 53–73, 102–122, 124–144, 149–169, 170–190, 227–249, 254–276, and 288–308; these read VLAYLALTKPRVIELLLVTAI, PLLILNTLLGGISAAAGANTF, NALVLGLALTAGSFFWLWWTT, LLSGLLALATVAFYVFVYTLL, TSQNVVWGGAAGCMPVMIGWS, AITDTIGWPALAMFAIIFFWT, LIYTWLTALSTLVLALATGWLYM, VAGAWFLTMAHQLYVGVCAGEPV, and YLAVVFCALAVDSVLALPTLF.

The protein belongs to the UbiA prenyltransferase family. Protoheme IX farnesyltransferase subfamily.

It is found in the cell membrane. The enzyme catalyses heme b + (2E,6E)-farnesyl diphosphate + H2O = Fe(II)-heme o + diphosphate. Its pathway is porphyrin-containing compound metabolism; heme O biosynthesis; heme O from protoheme: step 1/1. Its function is as follows. Converts heme B (protoheme IX) to heme O by substitution of the vinyl group on carbon 2 of heme B porphyrin ring with a hydroxyethyl farnesyl side group. This Mycobacterium leprae (strain TN) protein is Protoheme IX farnesyltransferase.